A 37-amino-acid chain; its full sequence is Large ribosomal subunit protein bL36 (37 aa).

The protein belongs to the bacterial ribosomal protein bL36 family.

This is Large ribosomal subunit protein bL36 from Trichlorobacter lovleyi (strain ATCC BAA-1151 / DSM 17278 / SZ) (Geobacter lovleyi).